A 242-amino-acid polypeptide reads, in one-letter code: Protein HTATIP2 (242 aa).

An N-acetylalanine modification is found at Ala-2. The segment at 2-25 (AETEALSKLREDFRMQNKSVFILG) is required for interaction with elongation factor EEF1A1. Ser-27, Gly-28, Glu-29, Thr-30, Arg-52, Arg-53, Leu-92, Gly-93, Tyr-143, Lys-147, Leu-170, and Arg-178 together coordinate NADPH. Tyr-143 functions as the Proton acceptor in the catalytic mechanism. Lys-147 is an active-site residue.

In terms of assembly, monomer. Forms homodimers during oxidative stress. Interacts (via N-terminus) with elongation factor EEF1A1 (via middle-region); the interaction is direct and competes with EEF1A1 binding to guanyl-nucleotide exchange factor EEF1B2, thereby inhibiting GDP for GTP exchange and reactivation of EEF1A1. Interacts with nuclear transport receptors XPO4, IPO5/RANBP5, IPO7, IPO9 and KPNB1 as well as GCN1L1/GCN1 and LRPPRC probably through their HEAT repeats. Binds NCOA5/CIA.

The protein localises to the cytoplasm. In terms of biological role, represses translation by preventing reactivation of elongation factor eEF1A. May also inhibit nuclear import by competing with nuclear import substrates for binding to a subset of nuclear transport receptors. Has additionally been proposed to act as a redox sensor involved in cellular oxidative stress surveillance. In Pongo pygmaeus (Bornean orangutan), this protein is Protein HTATIP2 (HTATIP2).